Here is a 175-residue protein sequence, read N- to C-terminus: Large ribosomal subunit protein uL10 (175 aa).

Belongs to the universal ribosomal protein uL10 family. Part of the ribosomal stalk of the 50S ribosomal subunit. The N-terminus interacts with L11 and the large rRNA to form the base of the stalk. The C-terminus forms an elongated spine to which L12 dimers bind in a sequential fashion forming a multimeric L10(L12)X complex.

Functionally, forms part of the ribosomal stalk, playing a central role in the interaction of the ribosome with GTP-bound translation factors. The sequence is that of Large ribosomal subunit protein uL10 from Prochlorococcus marinus (strain NATL2A).